A 342-amino-acid chain; its full sequence is [Citrate [pro-3S]-lyase] ligase (342 aa).

The N-acetyltransferase domain maps to Met1–Glu127.

The catalysed reaction is holo-[citrate lyase ACP] + acetate + ATP = acetyl-[citrate lyase ACP] + AMP + diphosphate. Acetylation of prosthetic group (2-(5''-phosphoribosyl)-3'-dephosphocoenzyme-A) of the gamma subunit of citrate lyase. The sequence is that of [Citrate [pro-3S]-lyase] ligase (citC) from Klebsiella pneumoniae.